The following is a 1778-amino-acid chain: Internalin I (1778 aa).

An N-terminal signal peptide occupies residues 1–28; that stretch reads MKKKFSIVIISVLLLGYLAPFDTLLVGA. The tract at residues 36–101 is disordered; that stretch reads DTAVKTAEAD…NIKTEINTDK (66 aa). Acidic residues predominate over residues 51–62; it reads IESETGSDDETA. Residues 63–88 are compositionally biased toward basic and acidic residues; the sequence is EEPKEAKEAEASKETTEKEEKAKTEE. LRR repeat units lie at residues 155–179, 183–204, 205–227, 228–250, 251–272, 277–298, 299–321, 322–344, 345–367, 368–389, 390–412, 413–434, 435–456, 457–478, 479–500, 501–522, 523–544, 545–566, 567–588, 589–610, 611–632, 633–653, 657–678, 685–707, 708–729, 730–751, and 752–773; these read AISQLDLSGETGNDPTDISNIEGLQ, NLTSLNLSENNISDLAPLKDLV, NLVSLNLSSNRTLVNLSGVEDLV, NLQELNVSANKALEDISQVASLP, VLKEISAQGCNIKTLELKNPAG, ELETFYLQENDLTNLTSLAKLP, KLKNLYIKGNASLKSLETLNGAT, KLQLIDASNCTDLETLGDISGLS, ELEMIQLSGCSKLKEITSLKNLP, NLVNITADSCAIEDLGTLNNLP, KLQTLVLSDNENLTNITAITDLP, QLKTLTLDGCGITSIGTLDNLP, KLEKLDLKENQITSISEITDLP, RLSYLDVSVNNLTTIGDLKKLP, LLEWLNVSSNRLSDVSTLTNFP, SLNYINISNNVIRTVGKMTELP, SLKEFYAQNNSISDISMIHDMP, NLRKVDASNNLITNIGTFDNLP, KLQSLDVHSNRITSTSVIHDLP, SLETFNAQTNLITNIGTMDNLP, DLTYVNLSFNRIPSLAPIGDLP, NLETLIVSDNNSYLRSLGTMD, KLRILDLQNNYLNYTGTEGNLS, NLTELNLRNNVYIDDISGLSTLS, RLIYLNLDSNKIEDISALSNLT, NLQELTLENNKIENISALSDLE, and NLNKLVVSKNKIIDISPVANMV. In terms of domain architecture, LRRCT spans 785-872; the sequence is TYTLPTVLSY…SAAKVTADAE (88 aa). 3 consecutive MucBP domains span residues 1510–1569, 1575–1634, and 1644–1705; these read DAAA…EQTV, AIKP…PQTI, and SKKS…SQTV. The disordered stretch occupies residues 1716–1742; it reads SKDDPKVKGKTNQPSSTDTKLKVDNNS. Residues 1725–1742 are compositionally biased toward polar residues; that stretch reads KTNQPSSTDTKLKVDNNS. Positions 1743-1747 match the LPXTG sorting signal motif; the sequence is LPATG. T1746 bears the Pentaglycyl murein peptidoglycan amidated threonine mark. Residues 1747–1778 constitute a propeptide, removed by sortase; that stretch reads GDTENMILAVLIGFNMLIVASIFLFRKPKTNQ.

This sequence belongs to the internalin family.

The protein resides in the secreted. It is found in the cell wall. A role in virulence could not be demonstrated. The sequence is that of Internalin I (inlI) from Listeria monocytogenes serovar 1/2a (strain ATCC BAA-679 / EGD-e).